Consider the following 187-residue polypeptide: dCTP deaminase, dUMP-forming (187 aa).

Residues 101-106 (KSSLGR) and Asp-119 contribute to the dCTP site. Glu-129 (proton donor/acceptor) is an active-site residue. The dCTP site is built by Gln-148, Tyr-162, and Gln-174.

The protein belongs to the dCTP deaminase family. Homotrimer.

It carries out the reaction dCTP + 2 H2O = dUMP + NH4(+) + diphosphate. The protein operates within pyrimidine metabolism; dUMP biosynthesis; dUMP from dCTP: step 1/1. Functionally, bifunctional enzyme that catalyzes both the deamination of dCTP to dUTP and the hydrolysis of dUTP to dUMP without releasing the toxic dUTP intermediate. This is dCTP deaminase, dUMP-forming from Corynebacterium kroppenstedtii (strain DSM 44385 / JCM 11950 / CIP 105744 / CCUG 35717).